A 195-amino-acid polypeptide reads, in one-letter code: Putative inactive carbonic anhydrase 5B-like protein (195 aa).

121–122 is a substrate binding site; sequence TT.

The protein belongs to the alpha-carbonic anhydrase family.

This is Putative inactive carbonic anhydrase 5B-like protein (CA5BP1) from Homo sapiens (Human).